A 61-amino-acid chain; its full sequence is Metallothionein-1B (61 aa).

The segment at 1-29 (MDPNCSCVAGESCTCAGSCKCKQCRCASC) is beta. A divalent metal cation-binding residues include C5, C7, C13, C15, C19, C21, C24, C26, C29, C33, C34, C36, C37, C41, C44, C48, C50, C57, C59, and C60. Residues 30 to 61 (KKSCCSCCPVGCAKCAQGCVCKGASDKCSCCA) form an alpha region.

This sequence belongs to the metallothionein superfamily. Type 1 family.

Its function is as follows. Metallothioneins have a high content of cysteine residues that bind various heavy metals; these proteins are transcriptionally regulated by both heavy metals and glucocorticoids. The polypeptide is Metallothionein-1B (Equus caballus (Horse)).